Consider the following 595-residue polypeptide: Cardiolipin synthase (CMP-forming) / mitochondrial hydrolase fusion protein (595 aa).

A mitochondrion-targeting transit peptide spans 1–24 (MLHTINYRSWHLAARQLGRSTFRK). Helical transmembrane passes span 538–560 (ALQLLLLGLLITEPILPFDASFA) and 564–586 (LFYIVGCTTIASGASYCISRNTF).

It in the N-terminal section; belongs to the HAD-like hydrolase superfamily. This sequence in the C-terminal section; belongs to the CDP-alcohol phosphatidyltransferase class-I family. It depends on Mg(2+) as a cofactor. In terms of processing, proteolytically cleaved, presumably during its import into the mitochondrion by mitochondrial processing peptidase.

Its subcellular location is the mitochondrion. It localises to the mitochondrion inner membrane. The catalysed reaction is a CDP-1,2-diacyl-sn-glycerol + a 1,2-diacyl-sn-glycero-3-phospho-(1'-sn-glycerol) = a cardiolipin + CMP + H(+). In terms of biological role, catalyzes the synthesis of cardiolipin (CL) (diphosphatidylglycerol) by specifically transferring a phosphatidyl group from CDP-diacylglycerol to phosphatidylglycerol (PG). CL is a key phospholipid in mitochondrial membranes and plays important roles in maintaining the functional integrity and dynamics of mitochondria under both optimal and stress conditions. Activity is dispensable for viability. In Schizosaccharomyces pombe (strain 972 / ATCC 24843) (Fission yeast), this protein is Cardiolipin synthase (CMP-forming) / mitochondrial hydrolase fusion protein.